Reading from the N-terminus, the 333-residue chain is Ketol-acid reductoisomerase (NADP(+)) (333 aa).

Residues 2-182 (ANIYYDSDCD…GGGRAGILET (181 aa)) form the KARI N-terminal Rossmann domain. NADP(+)-binding positions include 25-28 (YGSQ), Lys48, Ser51, Ser53, and 83-86 (DTIQ). Residue His108 is part of the active site. Gly134 lines the NADP(+) pocket. The region spanning 183–331 (SFREETETDL…KKLRSMMKWL (149 aa)) is the KARI C-terminal knotted domain. Mg(2+) contacts are provided by Asp191, Glu195, Glu227, and Glu231. Ser252 is a substrate binding site.

Belongs to the ketol-acid reductoisomerase family. Mg(2+) serves as cofactor.

It catalyses the reaction (2R)-2,3-dihydroxy-3-methylbutanoate + NADP(+) = (2S)-2-acetolactate + NADPH + H(+). It carries out the reaction (2R,3R)-2,3-dihydroxy-3-methylpentanoate + NADP(+) = (S)-2-ethyl-2-hydroxy-3-oxobutanoate + NADPH + H(+). It participates in amino-acid biosynthesis; L-isoleucine biosynthesis; L-isoleucine from 2-oxobutanoate: step 2/4. It functions in the pathway amino-acid biosynthesis; L-valine biosynthesis; L-valine from pyruvate: step 2/4. Involved in the biosynthesis of branched-chain amino acids (BCAA). Catalyzes an alkyl-migration followed by a ketol-acid reduction of (S)-2-acetolactate (S2AL) to yield (R)-2,3-dihydroxy-isovalerate. In the isomerase reaction, S2AL is rearranged via a Mg-dependent methyl migration to produce 3-hydroxy-3-methyl-2-ketobutyrate (HMKB). In the reductase reaction, this 2-ketoacid undergoes a metal-dependent reduction by NADPH to yield (R)-2,3-dihydroxy-isovalerate. This is Ketol-acid reductoisomerase (NADP(+)) from Leptospira interrogans serogroup Icterohaemorrhagiae serovar copenhageni (strain Fiocruz L1-130).